Reading from the N-terminus, the 82-residue chain is Exodeoxyribonuclease 7 small subunit (82 aa).

It belongs to the XseB family. In terms of assembly, heterooligomer composed of large and small subunits.

Its subcellular location is the cytoplasm. It catalyses the reaction Exonucleolytic cleavage in either 5'- to 3'- or 3'- to 5'-direction to yield nucleoside 5'-phosphates.. Functionally, bidirectionally degrades single-stranded DNA into large acid-insoluble oligonucleotides, which are then degraded further into small acid-soluble oligonucleotides. This chain is Exodeoxyribonuclease 7 small subunit, found in Colwellia psychrerythraea (strain 34H / ATCC BAA-681) (Vibrio psychroerythus).